A 135-amino-acid polypeptide reads, in one-letter code: Flagellar assembly factor FliW 2 (135 aa).

This sequence belongs to the FliW family. Interacts with translational regulator CsrA and flagellin(s).

It is found in the cytoplasm. Its function is as follows. Acts as an anti-CsrA protein, binds CsrA and prevents it from repressing translation of its target genes, one of which is flagellin. Binds to flagellin and participates in the assembly of the flagellum. The protein is Flagellar assembly factor FliW 2 of Helicobacter acinonychis (strain Sheeba).